The following is a 354-amino-acid chain: Rhodopsin (354 aa).

Topologically, residues 1–36 (MNGTEGPNFYVPMSNKTGVVRSPFDYPQYYLAEPWQ) are extracellular. 2 N-linked (GlcNAc...) asparagine glycosylation sites follow: Asn-2 and Asn-15. The helical transmembrane segment at 37-61 (YSALAAYMFLLILLGLPINFMTLFV) threads the bilayer. At 62–73 (TIQHKKLRTPLN) the chain is on the cytoplasmic side. A helical transmembrane segment spans residues 74-96 (YILLNLVFANHFMVLCGFTVTMY). Topologically, residues 97-110 (TSMHGYFIFGPTGC) are extracellular. An intrachain disulfide couples Cys-110 to Cys-187. The chain crosses the membrane as a helical span at residues 111–133 (YIEGFFATLGGEVALWSLVVLAV). A 'Ionic lock' involved in activated form stabilization motif is present at residues 134–136 (ERY). The Cytoplasmic portion of the chain corresponds to 134 to 152 (ERYIVVCKPMANFRFGENH). The helical transmembrane segment at 153–173 (AIMGVAFTWIMALSCAAPPLF) threads the bilayer. The Extracellular portion of the chain corresponds to 174–202 (GWSRYIPEGMQCSCGVDYYTLKPEVNNES). A helical membrane pass occupies residues 203–224 (FVIYMFIVHFTIPLIVIFFCYG). At 225-252 (RLLCTVKEAAAQQQESLTTQKAEKEVTR) the chain is on the cytoplasmic side. The chain crosses the membrane as a helical span at residues 253–274 (MVVIMVVFFLICWVPYAYVAFY). The Extracellular portion of the chain corresponds to 275 to 286 (IFTHQGSNFGPV). The helical transmembrane segment at 287-308 (FMTVPAFFAKSSAIYNPVIYIV) threads the bilayer. Position 296 is an N6-(retinylidene)lysine (Lys-296). The Cytoplasmic segment spans residues 309–354 (LNKQFRNCLITTLCCGKNPFGDEDGSSAATSKTEASSVSSSQVSPA). Residues Cys-322 and Cys-323 are each lipidated (S-palmitoyl cysteine). The interval 331–354 (EDGSSAATSKTEASSVSSSQVSPA) is disordered. A compositionally biased stretch (low complexity) spans 334-354 (SSAATSKTEASSVSSSQVSPA).

This sequence belongs to the G-protein coupled receptor 1 family. Opsin subfamily. In terms of processing, contains one covalently linked retinal chromophore. Upon light absorption, the covalently bound 11-cis-retinal is converted to all-trans-retinal. After hydrolysis of the Schiff base and release of the covalently bound all-trans-retinal, active rhodopsin is regenerated by binding of a fresh molecule of 11-cis-retinal.

It is found in the membrane. It localises to the cell projection. The protein localises to the cilium. The protein resides in the photoreceptor outer segment. Photoreceptor required for image-forming vision at low light intensity. Required for photoreceptor cell viability after birth. Light-induced isomerization of 11-cis to all-trans retinal triggers a conformational change that activates signaling via G-proteins. Subsequent receptor phosphorylation mediates displacement of the bound G-protein alpha subunit by arrestin and terminates signaling. The polypeptide is Rhodopsin (rho) (Xenopus laevis (African clawed frog)).